The following is a 213-amino-acid chain: Uridine kinase (213 aa).

Position 15-22 (15-22 (GASASGKS)) interacts with ATP.

The protein belongs to the uridine kinase family.

It is found in the cytoplasm. It catalyses the reaction uridine + ATP = UMP + ADP + H(+). The catalysed reaction is cytidine + ATP = CMP + ADP + H(+). The protein operates within pyrimidine metabolism; CTP biosynthesis via salvage pathway; CTP from cytidine: step 1/3. Its pathway is pyrimidine metabolism; UMP biosynthesis via salvage pathway; UMP from uridine: step 1/1. This chain is Uridine kinase, found in Yersinia pseudotuberculosis serotype O:1b (strain IP 31758).